The primary structure comprises 431 residues: Glutamate--tRNA ligase 1 (431 aa).

The 'HIGH' region motif lies at 6-16 (PSPTGDMHIGN). The short motif at 235–239 (KMSKR) is the 'KMSKS' region element. Lysine 238 contacts ATP.

Belongs to the class-I aminoacyl-tRNA synthetase family. Glutamate--tRNA ligase type 1 subfamily. As to quaternary structure, monomer.

It is found in the cytoplasm. The catalysed reaction is tRNA(Glu) + L-glutamate + ATP = L-glutamyl-tRNA(Glu) + AMP + diphosphate. Functionally, catalyzes the attachment of glutamate to tRNA(Glu) in a two-step reaction: glutamate is first activated by ATP to form Glu-AMP and then transferred to the acceptor end of tRNA(Glu). The polypeptide is Glutamate--tRNA ligase 1 (Nitratiruptor sp. (strain SB155-2)).